A 424-amino-acid polypeptide reads, in one-letter code: 3-phosphoshikimate 1-carboxyvinyltransferase (424 aa).

Residues Lys21, Ser22, and Arg26 each contribute to the 3-phosphoshikimate site. Lys21 serves as a coordination point for phosphoenolpyruvate. Gly92 and Arg120 together coordinate phosphoenolpyruvate. 3-phosphoshikimate-binding residues include Ser163, Ser164, Gln165, Ser191, Asp306, and Lys333. Position 165 (Gln165) interacts with phosphoenolpyruvate. Asp306 acts as the Proton acceptor in catalysis. Arg337, Arg379, and Lys405 together coordinate phosphoenolpyruvate.

The protein belongs to the EPSP synthase family. In terms of assembly, monomer.

Its subcellular location is the cytoplasm. It catalyses the reaction 3-phosphoshikimate + phosphoenolpyruvate = 5-O-(1-carboxyvinyl)-3-phosphoshikimate + phosphate. It participates in metabolic intermediate biosynthesis; chorismate biosynthesis; chorismate from D-erythrose 4-phosphate and phosphoenolpyruvate: step 6/7. Its function is as follows. Catalyzes the transfer of the enolpyruvyl moiety of phosphoenolpyruvate (PEP) to the 5-hydroxyl of shikimate-3-phosphate (S3P) to produce enolpyruvyl shikimate-3-phosphate and inorganic phosphate. The sequence is that of 3-phosphoshikimate 1-carboxyvinyltransferase from Clostridium perfringens (strain ATCC 13124 / DSM 756 / JCM 1290 / NCIMB 6125 / NCTC 8237 / Type A).